The primary structure comprises 232 residues: A-type ATP synthase subunit D (232 aa).

Positions Lys-200 to Asp-232 are disordered. The span at Glu-209–Asp-222 shows a compositional bias: acidic residues.

Belongs to the V-ATPase D subunit family. In terms of assembly, has multiple subunits with at least A(3), B(3), C, D, E, F, H, I and proteolipid K(x).

Its subcellular location is the cell membrane. In terms of biological role, component of the A-type ATP synthase that produces ATP from ADP in the presence of a proton gradient across the membrane. The chain is A-type ATP synthase subunit D from Haloquadratum walsbyi (strain DSM 16790 / HBSQ001).